We begin with the raw amino-acid sequence, 360 residues long: D-alanine--D-alanine ligase (360 aa).

Residues 146–352 (KLCAVQAGIH…FTELIDRLVR (207 aa)) enclose the ATP-grasp domain. 179 to 234 (KKRFAPPFFVKPANLGSSVGIAKIHSFDELENALDEACRLDVKILVEKAIEGREVE) serves as a coordination point for ATP. Residues D305, E319, and N321 each contribute to the Mg(2+) site.

It belongs to the D-alanine--D-alanine ligase family. Mg(2+) is required as a cofactor. It depends on Mn(2+) as a cofactor.

It localises to the cytoplasm. The enzyme catalyses 2 D-alanine + ATP = D-alanyl-D-alanine + ADP + phosphate + H(+). It participates in cell wall biogenesis; peptidoglycan biosynthesis. Cell wall formation. The protein is D-alanine--D-alanine ligase of Chlorobium phaeobacteroides (strain BS1).